A 219-amino-acid polypeptide reads, in one-letter code: Uracil-DNA glycosylase (219 aa).

Catalysis depends on Asp63, which acts as the Proton acceptor.

Belongs to the uracil-DNA glycosylase (UDG) superfamily. UNG family.

It is found in the cytoplasm. It carries out the reaction Hydrolyzes single-stranded DNA or mismatched double-stranded DNA and polynucleotides, releasing free uracil.. In terms of biological role, excises uracil residues from the DNA which can arise as a result of misincorporation of dUMP residues by DNA polymerase or due to deamination of cytosine. The chain is Uracil-DNA glycosylase from Mesomycoplasma hyopneumoniae (strain 7448) (Mycoplasma hyopneumoniae).